The following is a 315-amino-acid chain: MGSGSGWKGRDVISILDFDRDSLEQLFEVADKFSSLLRERGRIPLLEGYIVALAFFEPSTRTRLSFETAAKRLGADTIGFTSEEAISIAKGETLADTIRMLDSYADMIVLRHRYEGAALYAAEIAEHPVINAGDGKQHHPTQAMLDLYTVRKLFGTIDGLTYGVLGDLRYGRAASSFILALTIYRPRMIYLISPPLLRVRPEVRMVLDERGMRYREVESLEEVLGELDVLYVTRIQRERFPDQREYEKVRGSYRVTLELLEQHARRELRILHPLPRVDEIAPEVDGTPYAAYFEQARNGVPVRMALLALIAGREV.

R61 and T62 together coordinate carbamoyl phosphate. K90 lines the L-aspartate pocket. Carbamoyl phosphate contacts are provided by R111, H139, and Q142. Positions 172 and 234 each coordinate L-aspartate. Residues L274 and P275 each coordinate carbamoyl phosphate.

Belongs to the aspartate/ornithine carbamoyltransferase superfamily. ATCase family. As to quaternary structure, heterooligomer of catalytic and regulatory chains.

It carries out the reaction carbamoyl phosphate + L-aspartate = N-carbamoyl-L-aspartate + phosphate + H(+). It participates in pyrimidine metabolism; UMP biosynthesis via de novo pathway; (S)-dihydroorotate from bicarbonate: step 2/3. Its function is as follows. Catalyzes the condensation of carbamoyl phosphate and aspartate to form carbamoyl aspartate and inorganic phosphate, the committed step in the de novo pyrimidine nucleotide biosynthesis pathway. This chain is Aspartate carbamoyltransferase catalytic subunit, found in Hyperthermus butylicus (strain DSM 5456 / JCM 9403 / PLM1-5).